Consider the following 1943-residue polypeptide: Protocadherin-15 (1943 aa).

Positions 1 to 26 (MFLQFAVWKCLPHGILIASLLVVSWG) are cleaved as a signal peptide. Over 27 to 1381 (QYDDDWQYED…GESLGYTEGA (1355 aa)) the chain is Extracellular. Residues cysteine 37 and cysteine 125 are joined by a disulfide bond. Cadherin domains follow at residues 45 to 152 (PATI…SPTF), 153 to 270 (KHES…GPMF), 283 to 400 (RPLT…SPYF), 401 to 514 (TMPS…TPTF), 515 to 621 (PEIS…PPRF), 622 to 722 (PQLM…APVF), 724 to 824 (PYLP…SPVF), 825 to 931 (TNST…PPVF), 932 to 1040 (SKRI…IPRF), 1042 to 1149 (QEEY…PPVF), and 1150 to 1264 (QKKF…PPTL). N-linked (GlcNAc...) asparagine glycans are attached at residues asparagine 57, asparagine 102, and asparagine 206. Asparagine 424, asparagine 564, asparagine 667, asparagine 729, asparagine 773, asparagine 826, and asparagine 856 each carry an N-linked (GlcNAc...) asparagine glycan. N-linked (GlcNAc...) asparagine glycosylation is found at asparagine 1069, asparagine 1089, and asparagine 1180. A helical transmembrane segment spans residues 1382–1402 (LLALAFIIILCCIPAILVVLV). The Cytoplasmic portion of the chain corresponds to 1403-1943 (SYRQFKVRQA…VQPHSQSTSL (541 aa)). Disordered stretches follow at residues 1425 to 1453 (PAAK…AHLY), 1475 to 1533 (GNNS…STHN), and 1714 to 1865 (ILNS…EPHR). Pro residues predominate over residues 1431–1449 (APVPAAPAPPPPPPPPPPG). Composition is skewed to basic and acidic residues over residues 1480–1489 (PEDRSSHRDG) and 1498–1509 (ESHEPAHVEGPL). Composition is skewed to pro residues over residues 1742–1760 (PHPP…PRPP) and 1769–1779 (PLSPPNPPPPQ). The span at 1784–1795 (SLPISTPPTSSL) shows a compositional bias: low complexity. The span at 1796-1821 (PLPPPLSLPPPPRPPAPRLFPQPPST) shows a compositional bias: pro residues. The segment covering 1822–1834 (SIPSTDSISAPAA) has biased composition (low complexity). The segment covering 1846–1858 (TTSTTQPPASNPQ) has biased composition (polar residues).

As to quaternary structure, antiparallel heterodimer with CDH23. Found in a complex with TMIE and LHFPL5. Interacts with LHFPL5/TMHS; this interaction is required for efficient localization to hair bundles. Interacts with MYO7A. Interacts with USH1G; this interaction may recruit USH1G to the plasma membrane. Interacts with TOMT. Isoforms CD1 and CD3 interact with TMC1 (via N-terminus) and TMC2 (via N-terminus). Interacts with PIEZO1. As to expression, expressed in brain and sensory epithelium of the developing inner ear. Expressed in the retina, in the photoreceptor inner segments, the outer plexiform layer, the inner nuclei layer and the ganglion cell layer and, more diffusely in the inner plexiform layer (at protein level). Not detected in the retinal pigment epithelium (at protein level). Expressed in the spleen, dorsal root ganglion, dorsal aspect of neural tube, floor plate and ependymal cells adjacent to the neural canal.

It localises to the cell membrane. The protein localises to the secreted. In terms of biological role, calcium-dependent cell-adhesion protein. Required for inner ear neuroepithelial cell elaboration and cochlear function. Probably involved in the maintenance of normal retinal function. The polypeptide is Protocadherin-15 (Pcdh15) (Mus musculus (Mouse)).